The sequence spans 260 residues: Small ribosomal subunit protein uS2 (260 aa).

Residues 228–240 are compositionally biased toward basic and acidic residues; that stretch reads RKETKAENAEEAM. Positions 228–260 are disordered; that stretch reads RKETKAENAEEAMKQAAEAEAEAAAPAAEESAE. Positions 241–260 are enriched in low complexity; it reads KQAAEAEAEAAAPAAEESAE.

This sequence belongs to the universal ribosomal protein uS2 family.

This chain is Small ribosomal subunit protein uS2, found in Oleidesulfovibrio alaskensis (strain ATCC BAA-1058 / DSM 17464 / G20) (Desulfovibrio alaskensis).